The following is a 212-amino-acid chain: Outer-membrane lipoprotein carrier protein (212 aa).

An N-terminal signal peptide occupies residues 1–29 (MSSARRRALGFSFQALLLCAAGWHGAAQA).

This sequence belongs to the LolA family. Monomer.

It localises to the periplasm. Functionally, participates in the translocation of lipoproteins from the inner membrane to the outer membrane. Only forms a complex with a lipoprotein if the residue after the N-terminal Cys is not an aspartate (The Asp acts as a targeting signal to indicate that the lipoprotein should stay in the inner membrane). The protein is Outer-membrane lipoprotein carrier protein of Leptothrix cholodnii (strain ATCC 51168 / LMG 8142 / SP-6) (Leptothrix discophora (strain SP-6)).